The following is a 429-amino-acid chain: MTRRAIGVSERPPLLQTIPLSLQHLFAMFGATVLVPVLFHINPATVLLFNGIGTLLYLFICKGKIPAYLGSSFAFISPVLLLLPLGYEVALGGFIMCGVLFCLVSFIVKKAGTGWLDVLFPPAAMGAIVAVIGLELAGVAAGMAGLLPAEGQTPDSKTIIISITTLAVTVLGSVLFRGFLAIIPILIGVLVGYALSFAMGIVDTTPIINAHWFALPTLYTPRFEWFAILTILPAALVVIAEHVGHLVVTANIVKKDLLRDPGLHRSMFANGLSTVISGFFGSTPNTTYGENIGVMAITRVYSTWVIGGAAIFAILLSCVGKLAAAIQMIPLPVMGGVSLLLYGVIGASGIRVLIESKVDYNKAQNLILTSVILIIGVSGAKVNIGAAELKGMALATIVGIGLSLIFKLISVLRPEEVVLDAEDADITDK.

Residues 1–13 are Cytoplasmic-facing; it reads MTRRAIGVSERPP. The chain crosses the membrane as a helical span at residues 14-37; that stretch reads LLQTIPLSLQHLFAMFGATVLVPV. Residues 38-41 are Periplasmic-facing; the sequence is LFHI. Residues 42–61 form a helical membrane-spanning segment; that stretch reads NPATVLLFNGIGTLLYLFIC. Residues 62-64 lie on the Cytoplasmic side of the membrane; it reads KGK. Residues 65-81 form a discontinuously helical membrane-spanning segment; the sequence is IPAYLGSSFAFISPVLL. Phe73 is a binding site for uracil. At 82–89 the chain is on the periplasmic side; that stretch reads LLPLGYEV. A helical membrane pass occupies residues 90-110; it reads ALGGFIMCGVLFCLVSFIVKK. The Cytoplasmic portion of the chain corresponds to 111–122; it reads AGTGWLDVLFPP. The helical transmembrane segment at 123–144 threads the bilayer; that stretch reads AAMGAIVAVIGLELAGVAAGMA. The Periplasmic segment spans residues 145–155; sequence GLLPAEGQTPD. The helical transmembrane segment at 156 to 171 threads the bilayer; it reads SKTIIISITTLAVTVL. Residues 172 to 178 are Cytoplasmic-facing; the sequence is GSVLFRG. Residues 179-199 form a helical membrane-spanning segment; it reads FLAIIPILIGVLVGYALSFAM. Residues 200–224 lie on the Periplasmic side of the membrane; sequence GIVDTTPIINAHWFALPTLYTPRFE. Residues 225-248 form a helical membrane-spanning segment; sequence WFAILTILPAALVVIAEHVGHLVV. Uracil is bound at residue Glu241. Residues 249 to 261 lie on the Cytoplasmic side of the membrane; that stretch reads TANIVKKDLLRDP. Residues 262–281 traverse the membrane as a helical segment; the sequence is GLHRSMFANGLSTVISGFFG. Residues 282–298 form a discontinuously helical membrane-spanning segment; that stretch reads STPNTTYGENIGVMAIT. Residues Gly289 and Glu290 each contribute to the uracil site. Residues 299–301 lie on the Cytoplasmic side of the membrane; sequence RVY. The helical transmembrane segment at 302-319 threads the bilayer; it reads STWVIGGAAIFAILLSCV. Residues 320–332 lie on the Periplasmic side of the membrane; it reads GKLAAAIQMIPLP. A helical membrane pass occupies residues 333–354; that stretch reads VMGGVSLLLYGVIGASGIRVLI. The Cytoplasmic portion of the chain corresponds to 355–365; that stretch reads ESKVDYNKAQN. The segment at residues 366–401 is an intramembrane region (discontinuously helical); the sequence is LILTSVILIIGVSGAKVNIGAAELKGMALATIVGIG. Over 402–429 the chain is Cytoplasmic; sequence LSLIFKLISVLRPEEVVLDAEDADITDK.

The protein belongs to the nucleobase:cation symporter-2 (NCS2) (TC 2.A.40) family.

It is found in the cell inner membrane. The catalysed reaction is uracil(in) + H(+)(in) = uracil(out) + H(+)(out). Functionally, transport of uracil in the cell. This chain is Uracil permease (uraA), found in Escherichia coli O157:H7.